A 494-amino-acid polypeptide reads, in one-letter code: Nuclear distribution protein PAC1 (494 aa).

The LisH domain occupies 14-46 (QKNELDKSVLRYLNWNYKQTVRHEHAQDYESVR). The stretch at 90-123 (NSIVRLQKKIIELEQNTETLVSQIKDLNTQVSEL) forms a coiled coil. WD repeat units lie at residues 153-192 (NVES…IPLA), 196-244 (SHTK…CKFQ), 251-292 (GHEH…SLKT), 295-334 (PHSQ…SVGT), 347-395 (HFIE…LMAH), 415-454 (GHLS…HVWE), and 457-492 (HTGF…SNVF).

Belongs to the WD repeat LIS1/nudF family. Self-associates. Interacts with NDL1 and dynein.

The protein resides in the cytoplasm. It localises to the cytoskeleton. The protein localises to the spindle pole. Functionally, positively regulates the activity of the minus-end directed microtubule motor protein dynein. Plays a central role in positioning the mitotic spindle at the bud neck during cell division. Targets cytoplasmic dynein to microtubule plus ends, thereby promoting dynein-mediated microtubule sliding along the bud cortex and consequently the movement of the mitotic spindle to the bud neck. The polypeptide is Nuclear distribution protein PAC1 (Saccharomyces cerevisiae (strain YJM789) (Baker's yeast)).